Reading from the N-terminus, the 764-residue chain is Metabotropic glutamate receptor-like protein H (764 aa).

An N-terminal signal peptide occupies residues methionine 1–cysteine 20. Topologically, residues leucine 21–asparagine 393 are extracellular. N-linked (GlcNAc...) asparagine glycosylation is found at asparagine 72, asparagine 260, asparagine 278, asparagine 344, and asparagine 379. Residues glycine 394–isoleucine 414 traverse the membrane as a helical segment. At lysine 415 to proline 427 the chain is on the cytoplasmic side. The helical transmembrane segment at isoleucine 428–valine 448 threads the bilayer. At glycine 449–threonine 464 the chain is on the extracellular side. Residues leucine 465–phenylalanine 485 traverse the membrane as a helical segment. The Cytoplasmic portion of the chain corresponds to aspartate 486–leucine 500. A helical membrane pass occupies residues phenylalanine 501–valine 521. Residues glycine 522–serine 552 lie on the Extracellular side of the membrane. Asparagine 547 carries an N-linked (GlcNAc...) asparagine glycan. The chain crosses the membrane as a helical span at residues threonine 553–tryptophan 573. The Cytoplasmic segment spans residues lysine 574–glycine 587. A helical transmembrane segment spans residues alanine 588–isoleucine 608. Residues serine 609–threonine 617 are Extracellular-facing. A helical membrane pass occupies residues isoleucine 618–proline 638. Over lysine 639–asparagine 764 the chain is Cytoplasmic. Residues alanine 664–asparagine 764 are disordered. Residues glycine 671–asparagine 690 are compositionally biased toward low complexity. The segment covering glutamate 707 to valine 719 has biased composition (basic and acidic residues). Acidic residues predominate over residues phenylalanine 731 to leucine 748.

In the N-terminal section; belongs to the BMP lipoprotein family. The protein in the C-terminal section; belongs to the G-protein coupled receptor 3 family. GABA-B receptor subfamily.

Its subcellular location is the membrane. In Dictyostelium discoideum (Social amoeba), this protein is Metabotropic glutamate receptor-like protein H (grlH).